The sequence spans 789 residues: SH3 domain-containing protein 19 (789 aa).

Disordered regions lie at residues 24–170, 209–404, and 472–497; these read TNTE…PPRL, DDDV…RPKP, and TPLD…SGAP. At Ser65 the chain carries Phosphoserine. Over residues 296–305 the composition is skewed to basic and acidic residues; the sequence is SHSDRTRNPE. Over residues 335–351 the composition is skewed to pro residues; it reads WRPPPKGAPERPPPPKL. Over residues 352–361 the composition is skewed to low complexity; it reads PASKSSNKNL. A Phosphoserine modification is found at Ser368. SH3 domains are found at residues 414–476, 494–553, 570–629, 660–719, and 729–788; these read LSVP…PLDE, SGAP…VIVD, AKGP…LVGD, PPGE…PCPA, and PKGR…FLQV. Basic and acidic residues predominate over residues 474–484; that stretch reads LDERPRGRPND. Positions 635–663 are disordered; the sequence is ANILSTKVPPKTKNEDPGSNSQDSSPPGE.

As to quaternary structure, interacts with ADAM12. Isoform 2 (but not isoform 1) interacts with ADAM9, ADAM10, ADAM15 and ADAM17. Interacts with SH3GL1 SH3 domain. Interacts via SH3 3 and SH3 4 or SH3 4 and SH3 5 domains with SOS2. Probably forms a trimeric complex with SH3GL1 and SOS2. Interacts with SH3YL1. In terms of tissue distribution, expressed in hair follicles.

Its subcellular location is the cytoplasm. In terms of biological role, may play a role in regulating A disintegrin and metalloproteases (ADAMs) in the signaling of EGFR-ligand shedding. May be involved in suppression of Ras-induced cellular transformation and Ras-mediated activation of ELK1. Plays a role in the regulation of cell morphology and cytoskeletal organization. In Mus musculus (Mouse), this protein is SH3 domain-containing protein 19 (Sh3d19).